The following is a 397-amino-acid chain: Elongation factor Tu (397 aa).

Residues 10–207 (LPHVNVGTIG…TLDAYIPEPV (198 aa)) enclose the tr-type G domain. Residues 19-26 (GHVDHGKT) are G1. 19-26 (GHVDHGKT) serves as a coordination point for GTP. Thr26 contributes to the Mg(2+) binding site. Residues 60–64 (GITIN) are G2. The tract at residues 81–84 (DCPG) is G3. Residues 81–85 (DCPGH) and 136–139 (NKAD) contribute to the GTP site. The G4 stretch occupies residues 136–139 (NKAD). The interval 174–176 (SAR) is G5.

Belongs to the TRAFAC class translation factor GTPase superfamily. Classic translation factor GTPase family. EF-Tu/EF-1A subfamily. In terms of assembly, monomer.

Its subcellular location is the cytoplasm. It catalyses the reaction GTP + H2O = GDP + phosphate + H(+). In terms of biological role, GTP hydrolase that promotes the GTP-dependent binding of aminoacyl-tRNA to the A-site of ribosomes during protein biosynthesis. In Pseudomonas entomophila (strain L48), this protein is Elongation factor Tu.